The primary structure comprises 583 residues: NudC domain-containing protein 1 (583 aa).

S8 is modified (phosphoserine). One can recognise a CS domain in the interval 273–361 (IKEPLYYWQQ…NEGLTWPELV (89 aa)). Position 388 is a phosphoserine (S388).

As to expression, isoform 1 is specifically expressed in leukemias and a variety of solid tumor cell lines and is also detected in testis and heart. Isoform 2 is predominantly expressed in testis and weakly expressed in tumor cells.

It localises to the cytoplasm. It is found in the nucleus. This is NudC domain-containing protein 1 from Homo sapiens (Human).